Reading from the N-terminus, the 314-residue chain is Protein phosphatase PTC7 homolog fig (314 aa).

In terms of domain architecture, PPM-type phosphatase spans 43 to 309; sequence PYLVTVVQGR…DDITLILSSV (267 aa). Asp-87, Gly-88, and Asp-232 together coordinate Mn(2+).

This sequence belongs to the PP2C family. The cofactor is Mg(2+). Mn(2+) is required as a cofactor.

The enzyme catalyses O-phospho-L-seryl-[protein] + H2O = L-seryl-[protein] + phosphate. It carries out the reaction O-phospho-L-threonyl-[protein] + H2O = L-threonyl-[protein] + phosphate. The sequence is that of Protein phosphatase PTC7 homolog fig from Drosophila melanogaster (Fruit fly).